The following is a 442-amino-acid chain: Glutamyl-tRNA(Gln) amidotransferase subunit A (442 aa).

Residues K50 and S125 each act as charge relay system in the active site. Catalysis depends on S149, which acts as the Acyl-ester intermediate.

The protein belongs to the amidase family. GatA subfamily. In terms of assembly, heterotrimer of A, B and C subunits.

The enzyme catalyses L-glutamyl-tRNA(Gln) + L-glutamine + ATP + H2O = L-glutaminyl-tRNA(Gln) + L-glutamate + ADP + phosphate + H(+). Functionally, allows the formation of correctly charged Gln-tRNA(Gln) through the transamidation of misacylated Glu-tRNA(Gln) in organisms which lack glutaminyl-tRNA synthetase. The reaction takes place in the presence of glutamine and ATP through an activated gamma-phospho-Glu-tRNA(Gln). The chain is Glutamyl-tRNA(Gln) amidotransferase subunit A from Nitratiruptor sp. (strain SB155-2).